We begin with the raw amino-acid sequence, 249 residues long: Large ribosomal subunit protein uL1 (249 aa).

This sequence belongs to the universal ribosomal protein uL1 family. In terms of assembly, part of the 50S ribosomal subunit.

Its function is as follows. Binds directly to 23S rRNA. The L1 stalk is quite mobile in the ribosome, and is involved in E site tRNA release. Functionally, protein L1 is also a translational repressor protein, it controls the translation of the L11 operon by binding to its mRNA. The polypeptide is Large ribosomal subunit protein uL1 (Orientia tsutsugamushi (strain Ikeda) (Rickettsia tsutsugamushi)).